Reading from the N-terminus, the 206-residue chain is Halorhodopsin (206 aa).

A helical transmembrane segment spans residues 1–15 (IALAGLSILLFVYMG). Residues 16 to 21 (RNVEDP) are Cytoplasmic-facing. A helical transmembrane segment spans residues 22-45 (RAQLIFVATLMVPLVSISSYTGLV). Topologically, residues 46 to 75 (SGLTVGFLEMPAGHALAGMGAGPEGGVFTP) are extracellular. A helical transmembrane segment spans residues 76 to 97 (WGRYLTWAFSTPMILIALGLLA). At 98-100 (GSN) the chain is on the cytoplasmic side. The chain crosses the membrane as a helical span at residues 101-124 (MSKLFTAVVADVGMCITGLAAALT). The Extracellular portion of the chain corresponds to 125–127 (TSS). A helical transmembrane segment spans residues 128 to 150 (YLLRWVWYGISCAFFVVVLYILL). At 151–162 (AEWAKDAEVAGT) the chain is on the cytoplasmic side. The chain crosses the membrane as a helical span at residues 163–186 (ADIFNTLKVLTVVLWLGYPIFWAL). Topologically, residues 187–195 (GAEGLAVLD) are extracellular. Residues 196 to 206 (IAITSWAYSGM) traverse the membrane as a helical segment.

This sequence belongs to the archaeal/bacterial/fungal opsin family.

It is found in the cell membrane. Its function is as follows. Light-driven chloride pump. The chain is Halorhodopsin (hop) from Halobacterium halobium (strain mex).